The sequence spans 111 residues: MSQFEKQKEQGNSLFKQGLYREAVHCYDQLITAQPQNPVGYSNKAMALIKLGEYTQAIQMCQQGLRYTSTAEHVAIRSKLQYRLELAQGAVGSVQIPVVEVDELPEGYDRS.

Serine 2 carries the post-translational modification N-acetylserine. 2 TPR repeats span residues 4-37 and 39-71; these read FEKQ…QPQN and VGYS…TSTA.

Component of the R2TP complex composed at least of RVB1, RVB2, TAH1 and PIH1. Also interacts with HSP90.

It localises to the cytoplasm. Its subcellular location is the nucleus. The chain is TPR repeat-containing protein associated with Hsp90 (TAH1) from Saccharomyces cerevisiae (strain ATCC 204508 / S288c) (Baker's yeast).